The sequence spans 566 residues: MDIRAIVISLLISTCVQADRICVGYLSTNSTEKVDTLLESDVPVTSSIDLVETNHTGTYCSLDGISPVHLGDCSFEGWIVGNPACTSNFGIREWSYLIEDPSAPHGLCYPGELDNNGELRHLFSGIRSFSRTELIAPSSWGEVNDGATSACRDNTGTSSFYRNLIWFVKKDNRYPVISRTYNNTTGRDVLVMWGIHHPISTDETKLLYVNSDPYTLVTTSSWSKKYKLETGVRPGYNGQRSWMKIYWVLMHPGESITFESNGGLLAPRYGYIIEEYGKGRIFQSPIRIARCNTRCQTSVGGINTNKTFQNIERNALGNCPKYIKSGQLKLATGLRNVPATSNRGLFGAIAGFIEGGWPGLINGWYGFQHQNEQGVGIAADKESTQKAIDQITTKINNIIDKMNGNYDSIRGEFSQVEQRINMLADRIDDAVTDVWSYNAKLLVLLENDKTLDMHDANVRNLHEQVRKTLKANAIDEGNGCFELLHKCNDSCMETIRNGTYNHSEYAEESKLKRQEIEGIKLESEDNVYKALSIYSCIASSIVLVGLILAFIMWTCNSGNCRFNVCI.

Residues 1–18 form the signal peptide; the sequence is MDIRAIVISLLISTCVQA. Over 19-532 the chain is Extracellular; sequence DRICVGYLST…SEDNVYKALS (514 aa). Cystine bridges form between C22/C480, C60/C291, C73/C85, C108/C151, C295/C319, and C487/C491. N-linked (GlcNAc...) asparagine; by host glycosylation is found at N29 and N54. N182, N183, N305, N488, N497, and N501 each carry an N-linked (GlcNAc...) asparagine; by host glycan. Residues 533 to 553 traverse the membrane as a helical segment; sequence IYSCIASSIVLVGLILAFIMW. Residues 554–566 are Cytoplasmic-facing; the sequence is TCNSGNCRFNVCI. S-palmitoyl cysteine; by host attachment occurs at residues C555 and C565.

It belongs to the influenza viruses hemagglutinin family. As to quaternary structure, homotrimer of disulfide-linked HA1-HA2. Palmitoylated. In terms of processing, in natural infection, inactive HA is matured into HA1 and HA2 outside the cell by one or more trypsin-like, arginine-specific endoprotease secreted by the bronchial epithelial cells. One identified protease that may be involved in this process is secreted in lungs by club cells.

It localises to the virion membrane. Its subcellular location is the host apical cell membrane. In terms of biological role, binds to sialic acid-containing receptors on the cell surface, bringing about the attachment of the virus particle to the cell. This attachment induces virion internalization either through clathrin-dependent endocytosis or through clathrin- and caveolin-independent pathway. Plays a major role in the determination of host range restriction and virulence. Class I viral fusion protein. Responsible for penetration of the virus into the cell cytoplasm by mediating the fusion of the membrane of the endocytosed virus particle with the endosomal membrane. Low pH in endosomes induces an irreversible conformational change in HA2, releasing the fusion hydrophobic peptide. Several trimers are required to form a competent fusion pore. This chain is Hemagglutinin, found in Aves.